The sequence spans 278 residues: Shikimate dehydrogenase (NADP(+)) (278 aa).

Residues S18–S20 and T65 contribute to the shikimate site. The Proton acceptor role is filled by K69. Position 81 (E81) interacts with NADP(+). Residues N90 and D106 each contribute to the shikimate site. Residues G130–A134 and N154–K159 contribute to the NADP(+) site. A shikimate-binding site is contributed by Y223. NADP(+) is bound at residue G241.

Belongs to the shikimate dehydrogenase family. Homodimer.

The enzyme catalyses shikimate + NADP(+) = 3-dehydroshikimate + NADPH + H(+). The protein operates within metabolic intermediate biosynthesis; chorismate biosynthesis; chorismate from D-erythrose 4-phosphate and phosphoenolpyruvate: step 4/7. In terms of biological role, involved in the biosynthesis of the chorismate, which leads to the biosynthesis of aromatic amino acids. Catalyzes the reversible NADPH linked reduction of 3-dehydroshikimate (DHSA) to yield shikimate (SA). This chain is Shikimate dehydrogenase (NADP(+)), found in Vibrio cholerae serotype O1 (strain ATCC 39541 / Classical Ogawa 395 / O395).